Here is a 130-residue protein sequence, read N- to C-terminus: Small ribosomal subunit protein uS11 (130 aa).

This sequence belongs to the universal ribosomal protein uS11 family. As to quaternary structure, part of the 30S ribosomal subunit. Interacts with proteins S7 and S18. Binds to IF-3.

Located on the platform of the 30S subunit, it bridges several disparate RNA helices of the 16S rRNA. Forms part of the Shine-Dalgarno cleft in the 70S ribosome. This chain is Small ribosomal subunit protein uS11, found in Blochmanniella floridana.